Here is a 443-residue protein sequence, read N- to C-terminus: Glutamyl-tRNA reductase (443 aa).

Substrate contacts are provided by residues 55-58 (TCNR), S113, 118-120 (EPQ), and Q124. Residue C56 is the Nucleophile of the active site. 193-198 (GAGEMI) serves as a coordination point for NADP(+).

The protein belongs to the glutamyl-tRNA reductase family. In terms of assembly, homodimer.

The catalysed reaction is (S)-4-amino-5-oxopentanoate + tRNA(Glu) + NADP(+) = L-glutamyl-tRNA(Glu) + NADPH + H(+). The protein operates within porphyrin-containing compound metabolism; protoporphyrin-IX biosynthesis; 5-aminolevulinate from L-glutamyl-tRNA(Glu): step 1/2. Its pathway is porphyrin-containing compound metabolism; chlorophyll biosynthesis. In terms of biological role, catalyzes the NADPH-dependent reduction of glutamyl-tRNA(Glu) to glutamate 1-semialdehyde (GSA). In Methylibium petroleiphilum (strain ATCC BAA-1232 / LMG 22953 / PM1), this protein is Glutamyl-tRNA reductase.